Here is a 350-residue protein sequence, read N- to C-terminus: Putative deoxyribonuclease-2 (350 aa).

It belongs to the DNase II family.

The protein is Putative deoxyribonuclease-2 of Burkholderia pseudomallei (strain 1710b).